The sequence spans 144 residues: MQNILLLNGPNLNMLGKREPHIYGDQTLLEIEQRLKQQAIKQGYNLLCFQANGEEAIINRIHQAFGNIDFIIINPAAFTHTSIAIRDALLAVAIPFIEVHLSNICSRESFRHHSYFSDISQGIICGLGPKGYDYALDFAISSLK.

Tyr23 acts as the Proton acceptor in catalysis. Positions 74, 80, and 87 each coordinate substrate. The active-site Proton donor is His100. Residues 101–102 (LS) and Arg111 contribute to the substrate site.

Belongs to the type-II 3-dehydroquinase family. As to quaternary structure, homododecamer.

The enzyme catalyses 3-dehydroquinate = 3-dehydroshikimate + H2O. It functions in the pathway metabolic intermediate biosynthesis; chorismate biosynthesis; chorismate from D-erythrose 4-phosphate and phosphoenolpyruvate: step 3/7. Its function is as follows. Catalyzes a trans-dehydration via an enolate intermediate. The polypeptide is 3-dehydroquinate dehydratase (Haemophilus ducreyi (strain 35000HP / ATCC 700724)).